Here is a 227-residue protein sequence, read N- to C-terminus: Germin-like protein subfamily 3 member 2 (227 aa).

Positions 1-24 (MEANTLFLLKALCLLCFNVCFTLA) are cleaved as a signal peptide. A disulfide bridge connects residues Cys34 and Cys54. Residues Asn56 and Asn75 are each glycosylated (N-linked (GlcNAc...) asparagine). The 146-residue stretch at 68–213 (SGLKTAGNFT…AFGLSLKQIG (146 aa)) folds into the Cupin type-1 domain. His115, His117, Glu122, and His161 together coordinate Mn(2+).

This sequence belongs to the germin family. Oligomer (believed to be a pentamer but probably hexamer).

Its subcellular location is the secreted. It localises to the extracellular space. It is found in the apoplast. In terms of biological role, may play a role in plant defense. Probably has no oxalate oxidase activity even if the active site is conserved. The polypeptide is Germin-like protein subfamily 3 member 2 (Arabidopsis thaliana (Mouse-ear cress)).